Reading from the N-terminus, the 517-residue chain is Acyltransferase AFT15-1 (517 aa).

Histidine 180 serves as the catalytic Proton acceptor.

Belongs to the plant acyltransferase family.

Its pathway is mycotoxin biosynthesis. Its function is as follows. Acyltransferase; part of the gene clusters that mediate the biosynthesis of the host-selective toxins (HSTs) AF-toxins responsible for Alternaria black spot of strawberry disease by the strawberry pathotype. AF-toxin I and III are valine derivatives of 2,3-dyhydroxy-isovaleric acid and 2-hydroxy-isovaleric acid respectively, while AF II is an isoleucine derivative of 2-hydroxy-valeric acid. These derivatives are bound to a 9,10-epoxy-8-hydroxy-9-methyl-decatrienoic acid (EDA) moiety. On cellular level, AF-toxins affect plasma membrane of susceptible cells and cause a sudden increase in loss of K(+) after a few minutes of toxin treatment. The aldo-keto reductase AFTS1 catalyzes the conversion of 2-keto-isovaleric acid (2-KIV) to 2-hydroxy-isovaleric acid (2-HIV) by reduction of its ketone to an alcohol. The acyl-CoA ligase AFT1, the hydrolase AFT2 and the enoyl-CoA hydratases AFT3 and AFT6, but also the polyketide synthase AFT9, the acyl-CoA dehydrogenase AFT10, the cytochrome P450 monooxygenase AFT11 and the oxidoreductase AFT12 are all involved in the biosynthesis of the AK-, AF- and ACT-toxin common EDA structural moiety. The exact function of each enzyme, and of additional enzymes identified within the AF-toxin clusters have still to be determined. The protein is Acyltransferase AFT15-1 (AFT15-1) of Alternaria alternata (Alternaria rot fungus).